A 135-amino-acid chain; its full sequence is Protein PsiE homolog (135 aa).

The next 4 membrane-spanning stretches (helical) occupy residues 14–34, 54–74, 82–102, and 107–127; these read LQTILNIGLLALATILVIFLV, YQLIEGIVIYFLYFEFIALIV, HFPLRYFIYIGITAIIRLIIV, and PSDTLVYSAAILLLVVTLYLA.

This sequence belongs to the PsiE family.

It is found in the cell inner membrane. The polypeptide is Protein PsiE homolog (Pectobacterium atrosepticum (strain SCRI 1043 / ATCC BAA-672) (Erwinia carotovora subsp. atroseptica)).